Reading from the N-terminus, the 188-residue chain is Elongation factor P (188 aa).

The residue at position 34 (K34) is an N6-(3,6-diaminohexanoyl)-5-hydroxylysine.

Belongs to the elongation factor P family. In terms of processing, may be beta-lysylated on the epsilon-amino group of Lys-34 by the combined action of EpmA and EpmB, and then hydroxylated on the C5 position of the same residue by EpmC (if this protein is present). Lysylation is critical for the stimulatory effect of EF-P on peptide-bond formation. The lysylation moiety may extend toward the peptidyltransferase center and stabilize the terminal 3-CCA end of the tRNA. Hydroxylation of the C5 position on Lys-34 may allow additional potential stabilizing hydrogen-bond interactions with the P-tRNA.

It is found in the cytoplasm. It functions in the pathway protein biosynthesis; polypeptide chain elongation. Its function is as follows. Involved in peptide bond synthesis. Alleviates ribosome stalling that occurs when 3 or more consecutive Pro residues or the sequence PPG is present in a protein, possibly by augmenting the peptidyl transferase activity of the ribosome. Modification of Lys-34 is required for alleviation. This is Elongation factor P from Aliivibrio fischeri (strain ATCC 700601 / ES114) (Vibrio fischeri).